Reading from the N-terminus, the 174-residue chain is Methylated-DNA--protein-cysteine methyltransferase (174 aa).

Cys-144 serves as the catalytic Nucleophile; methyl group acceptor.

This sequence belongs to the MGMT family.

The protein localises to the cytoplasm. It carries out the reaction a 6-O-methyl-2'-deoxyguanosine in DNA + L-cysteinyl-[protein] = S-methyl-L-cysteinyl-[protein] + a 2'-deoxyguanosine in DNA. The catalysed reaction is a 4-O-methyl-thymidine in DNA + L-cysteinyl-[protein] = a thymidine in DNA + S-methyl-L-cysteinyl-[protein]. Its function is as follows. Involved in the cellular defense against the biological effects of O6-methylguanine (O6-MeG) and O4-methylthymine (O4-MeT) in DNA. Repairs the methylated nucleobase in DNA by stoichiometrically transferring the methyl group to a cysteine residue in the enzyme. This is a suicide reaction: the enzyme is irreversibly inactivated. The polypeptide is Methylated-DNA--protein-cysteine methyltransferase (Pyrococcus furiosus (strain ATCC 43587 / DSM 3638 / JCM 8422 / Vc1)).